Here is a 229-residue protein sequence, read N- to C-terminus: Putative germin-like protein 12-3 (229 aa).

The N-terminal stretch at 1–22 is a signal peptide; the sequence is MASSNFFLLIPLIALVTTQAMA. An intrachain disulfide couples cysteine 32 to cysteine 47. The Cupin type-1 domain maps to 62-217; the sequence is ANLDKPMDIT…AFQVDKKAVD (156 aa). N-linked (GlcNAc...) asparagine glycosylation occurs at asparagine 78. Residues histidine 111, histidine 113, glutamate 118, and histidine 162 each coordinate Mn(2+).

This sequence belongs to the germin family. As to quaternary structure, oligomer (believed to be a pentamer but probably hexamer).

The protein resides in the secreted. Its subcellular location is the extracellular space. It is found in the apoplast. Functionally, may play a role in plant defense. Probably has no oxalate oxidase activity even if the active site is conserved. The chain is Putative germin-like protein 12-3 from Oryza sativa subsp. japonica (Rice).